Reading from the N-terminus, the 483-residue chain is Cyclic AMP-dependent transcription factor ATF-7 (483 aa).

Residues 1–285 (MGDDRPFVCN…GMVVGSASTM (285 aa)) are transactivation domain. The C2H2-type zinc finger occupies 7–31 (FVCNAPGCGQRFTNEDHLAVHKHKH). At T51 the chain carries Phosphothreonine; by MAPK11. Phosphothreonine occurs at positions 53 and 101. A Glycyl lysine isopeptide (Lys-Gly) (interchain with G-Cter in SUMO1) cross-link involves residue K107. Disordered regions lie at residues 110-148 (EPVE…TPTP) and 299-345 (HPDA…NRAA). Composition is skewed to low complexity over residues 114–126 (VDSS…ASSP) and 307–320 (QPQV…PSTG). The segment covering 326-343 (TVDEDPDERRQRFLERNR) has biased composition (basic and acidic residues). The bZIP domain maps to 332–395 (DERRQRFLER…AQLKQLLLAH (64 aa)). The segment at 334 to 354 (RRQRFLERNRAAASRCRQKRK) is basic motif. The tract at residues 360 to 388 (LEKKAEELTSQNIQLSNEVTLLRNEVAQL) is leucine-zipper. 2 disordered regions span residues 407–440 (TQGY…SNGL) and 464–483 (LSMP…SAGR). Phosphoserine is present on residues S413 and S423. Polar residues predominate over residues 429–440 (QHSSATAPSNGL).

The protein belongs to the bZIP family. As to quaternary structure, homodimer; binds DNA as homodimer. Heterodimer; heterodimerizes with other members of ATF family and with JUN family members. Interacts with JNK2; the interaction does not phosphorylate ATF7 but acts as a docking site for other ATF-associated partners such as JUN family members. Interacts (via its transactivation domain) with TAF12 (isoforms TAFII15 and TAFII20); the interaction potentiates the transactivation activity (isoform TAFII20 only) and is inhibited by ATF7 sumoylation. Interacts with TAF4; the interaction inhibits the TAF12-dependent transactivation. Interacts with MAPK9; the interaction does not phosphorylate ATF7 but acts as a docking site for ATF7-associated partners such as JUN. Interacts with Ku complex components XRCC6 and XRCC7. Interacts with TERT. Post-translationally, on EGF stimulation, phosphorylated first on Thr-53 allowing subsequent phosphorylation on Thr-51. This latter phosphorylation prevents sumoylation, increases binding to TAF12 and enhances transcriptional activity. Social isolation stress as well as TNF-alpha also induce the phosphorylation of ATF7. Phosphorylated in proliferating colonic and small intestinal epithelial cells. Sumoylation delays nuclear localization and inhibits transactivation activity through preventing binding to TAF12. RANBP2 appears to be the specific E3 ligase.

The protein localises to the nucleus. The protein resides in the nucleoplasm. Its subcellular location is the chromosome. It is found in the telomere. Functionally, stress-responsive chromatin regulator that plays a role in various biological processes including innate immunological memory, adipocyte differentiation or telomerase regulation. In absence of stress, contributes to the formation of heterochromatin and heterochromatin-like structure by recruiting histone H3K9 tri- and di-methyltransferases thus silencing the transcription of target genes such as STAT1 in adipocytes, or genes involved in innate immunity in macrophages and adipocytes. Stress induces ATF7 phosphorylation that disrupts interactions with histone methyltransferase and enhances the association with coactivators containing histone acetyltransferase and/or histone demethylase, leading to disruption of the heterochromatin-like structure and subsequently transcriptional activation. In response to TNF-alpha, which is induced by various stresses, phosphorylated ATF7 and telomerase are released from telomeres leading to telomere shortening. Plays also a role in maintaining epithelial regenerative capacity and protecting against cell death during intestinal epithelial damage and repair. The sequence is that of Cyclic AMP-dependent transcription factor ATF-7 (ATF7) from Pongo abelii (Sumatran orangutan).